The following is a 383-amino-acid chain: MTVLSEKELIQIRRHLHEIPELALQEKETHDYLLKVIKNLKQDHLTIVVPKTLPTAILGLVKGINPKKTIGYRTDIDALPVQEKTGLPFTSKHSGIMHACGHDIHMTVALGLLSYFSENQPKDNLLFFFQPAEESESGGKQAYEKGLFQGKFKPDEFYGLHDNPELPAGSIGCRMGTLFAGTTEINIDVIGKSGHAAFPQNANDTVVAAANLIMQIQTIISRSIDPIQSGVITLGKVNAGVIRNVIAGHTRIEGTIRGLTQKMILQIDRRLQDVCDGIAHSYNVEVNLELNQGGYWPVENDPKITKNFISYMKKNPKVNFIETEPKMTGEDFGFLLAKFPGTMFWLGVGDPSSQLHSSTLNPDEKSIQSGIDAIKGFLIDRMG.

The active site involves D75. E134 serves as the catalytic Proton acceptor.

The protein belongs to the peptidase M20A family. N-acetyldiaminopimelate deacetylase subfamily.

The enzyme catalyses N-acetyl-(2S,6S)-2,6-diaminopimelate + H2O = (2S,6S)-2,6-diaminopimelate + acetate. The protein operates within amino-acid biosynthesis; L-lysine biosynthesis via DAP pathway; LL-2,6-diaminopimelate from (S)-tetrahydrodipicolinate (acetylase route): step 3/3. Its function is as follows. Catalyzes the conversion of N-acetyl-diaminopimelate to diaminopimelate and acetate. In Lactobacillus acidophilus (strain ATCC 700396 / NCK56 / N2 / NCFM), this protein is N-acetyldiaminopimelate deacetylase.